Reading from the N-terminus, the 232-residue chain is 2,3,4,5-tetrahydropyridine-2,6-dicarboxylate N-acetyltransferase (232 aa).

Belongs to the transferase hexapeptide repeat family. DapH subfamily.

It catalyses the reaction (S)-2,3,4,5-tetrahydrodipicolinate + acetyl-CoA + H2O = L-2-acetamido-6-oxoheptanedioate + CoA. It participates in amino-acid biosynthesis; L-lysine biosynthesis via DAP pathway; LL-2,6-diaminopimelate from (S)-tetrahydrodipicolinate (acetylase route): step 1/3. Catalyzes the transfer of an acetyl group from acetyl-CoA to tetrahydrodipicolinate. The sequence is that of 2,3,4,5-tetrahydropyridine-2,6-dicarboxylate N-acetyltransferase from Streptococcus suis (strain 98HAH33).